We begin with the raw amino-acid sequence, 185 residues long: Cuticle protein 18.6, isoform B (185 aa).

A run of 6 repeats spans residues 21–24, 33–36, 41–44, 133–136, 139–142, and 150–153. In terms of domain architecture, Chitin-binding type R&amp;R spans 64–134; it reads HPQYSFAYNV…KEAGAHPAAA (71 aa).

Its function is as follows. Component of the cuticle of migratory locust which contains more than 100 different structural proteins. This Locusta migratoria (Migratory locust) protein is Cuticle protein 18.6, isoform B.